The following is a 131-amino-acid chain: Small ribosomal subunit protein uS8 (131 aa).

It belongs to the universal ribosomal protein uS8 family. In terms of assembly, part of the 30S ribosomal subunit. Contacts proteins S5 and S12.

Its function is as follows. One of the primary rRNA binding proteins, it binds directly to 16S rRNA central domain where it helps coordinate assembly of the platform of the 30S subunit. In Vesicomyosocius okutanii subsp. Calyptogena okutanii (strain HA), this protein is Small ribosomal subunit protein uS8.